A 1288-amino-acid polypeptide reads, in one-letter code: 5-oxoprolinase (1288 aa).

Phosphothreonine is present on T151. The disordered stretch occupies residues 1249 to 1269 (GGGGYGDPEDPAPLPGSPLQP). Phosphoserine is present on S1265.

The protein belongs to the oxoprolinase family. As to quaternary structure, homodimer. In terms of tissue distribution, expressed in coronary artery and kidney.

It is found in the cytoplasm. The protein resides in the cytosol. The enzyme catalyses 5-oxo-L-proline + ATP + 2 H2O = L-glutamate + ADP + phosphate + H(+). In terms of biological role, catalyzes the cleavage of 5-oxo-L-proline to form L-glutamate coupled to the hydrolysis of ATP to ADP and inorganic phosphate. The polypeptide is 5-oxoprolinase (OPLAH) (Bos taurus (Bovine)).